The sequence spans 334 residues: S-adenosylmethionine:tRNA ribosyltransferase-isomerase (334 aa).

The protein belongs to the QueA family. Monomer.

The protein localises to the cytoplasm. It catalyses the reaction 7-aminomethyl-7-carbaguanosine(34) in tRNA + S-adenosyl-L-methionine = epoxyqueuosine(34) in tRNA + adenine + L-methionine + 2 H(+). It participates in tRNA modification; tRNA-queuosine biosynthesis. Functionally, transfers and isomerizes the ribose moiety from AdoMet to the 7-aminomethyl group of 7-deazaguanine (preQ1-tRNA) to give epoxyqueuosine (oQ-tRNA). This is S-adenosylmethionine:tRNA ribosyltransferase-isomerase from Rubrobacter xylanophilus (strain DSM 9941 / JCM 11954 / NBRC 16129 / PRD-1).